Here is a 447-residue protein sequence, read N- to C-terminus: Argininosuccinate synthase (447 aa).

ATP contacts are provided by residues 17–25 (AFSGGLDTS) and alanine 43. Position 99 (tyrosine 99) interacts with L-citrulline. Glycine 129 and threonine 131 together coordinate ATP. L-aspartate-binding residues include threonine 131, asparagine 135, and aspartate 136. Asparagine 135 is a binding site for L-citrulline. Aspartate 136 is a binding site for ATP. The L-citrulline site is built by arginine 139 and serine 192. Aspartate 194 contacts ATP. 3 residues coordinate L-citrulline: threonine 201, glutamate 203, and glutamate 280.

It belongs to the argininosuccinate synthase family. Type 2 subfamily. As to quaternary structure, homotetramer.

Its subcellular location is the cytoplasm. The enzyme catalyses L-citrulline + L-aspartate + ATP = 2-(N(omega)-L-arginino)succinate + AMP + diphosphate + H(+). It functions in the pathway amino-acid biosynthesis; L-arginine biosynthesis; L-arginine from L-ornithine and carbamoyl phosphate: step 2/3. This Salmonella dublin (strain CT_02021853) protein is Argininosuccinate synthase.